The sequence spans 380 residues: Glutamyl-tRNA reductase 1 (380 aa).

Residues 42 to 45 (TCNR), S93, 98 to 100 (ETD), and Q104 contribute to the substrate site. C43 functions as the Nucleophile in the catalytic mechanism. 172-177 (GAGAVG) lines the NADP(+) pocket.

It belongs to the glutamyl-tRNA reductase family. Homodimer.

The catalysed reaction is (S)-4-amino-5-oxopentanoate + tRNA(Glu) + NADP(+) = L-glutamyl-tRNA(Glu) + NADPH + H(+). The protein operates within porphyrin-containing compound metabolism; protoporphyrin-IX biosynthesis; 5-aminolevulinate from L-glutamyl-tRNA(Glu): step 1/2. Functionally, catalyzes the NADPH-dependent reduction of glutamyl-tRNA(Glu) to glutamate 1-semialdehyde (GSA). The protein is Glutamyl-tRNA reductase 1 of Pyrobaculum calidifontis (strain DSM 21063 / JCM 11548 / VA1).